Reading from the N-terminus, the 232-residue chain is Ras-related protein RabP (232 aa).

A GTP-binding site is contributed by Gly-15 to Ser-22. Positions Asp-35–Phe-40 match the Effector region motif. Residues Asp-58 to Gln-62 and Asn-118 to Asp-121 contribute to the GTP site. S-geranylgeranyl cysteine attachment occurs at residues Cys-229 and Cys-230.

Belongs to the small GTPase superfamily. Rab family.

The protein localises to the cell membrane. The sequence is that of Ras-related protein RabP (rabP) from Dictyostelium discoideum (Social amoeba).